The sequence spans 1098 residues: Transcription elongation regulator 1 (1098 aa).

Residues 1–15 (MAERGGDGGESERFN) show a composition bias toward basic and acidic residues. The disordered stretch occupies residues 1–105 (MAERGGDGGE…RPPFMPPPMS (105 aa)). Ser-11 is subject to Phosphoserine. The residue at position 20 (Arg-20) is an Omega-N-methylarginine. Asymmetric dimethylarginine occurs at positions 28, 30, 41, and 48. The span at 32 to 105 (PAPPPNAVMR…RPPFMPPPMS (74 aa)) shows a compositional bias: pro residues. A WW 1 domain is found at 131-164 (PPTEEIWVENKTPDGKVYYYNARTRESAWTKPDG). Residues 184–244 (QAQAQAQAQA…AQAQAQAQVQ (61 aa)) are a coiled coil. Low complexity predominate over residues 259–333 (STPTTSSPAP…PTATPVQTVP (75 aa)). The disordered stretch occupies residues 259 to 348 (STPTTSSPAP…TLPPAVPHSV (90 aa)). Pro residues predominate over residues 334 to 344 (QPHPQTLPPAV). In terms of domain architecture, WW 2 spans 429–462 (ATAVSEWTEYKTADGKTYYYNNRTLESTWEKPQE). Basic and acidic residues-rich tracts occupy residues 469–481 (LEEK…KEPS) and 496–506 (EEPIKEIKEEP). The interval 469 to 526 (LEEKIKEPIKEPSEEPLPMETEEEDPKEEPIKEIKEEPKEEEMTEEEKAAQKAKPVAT) is disordered. Glycyl lysine isopeptide (Lys-Gly) (interchain with G-Cter in SUMO2) cross-links involve residues Lys-503 and Lys-507. The WW 3 domain maps to 528–561 (PIPGTPWCVVWTGDERVFFYNPTTRLSMWDRPDD). Residues 606-655 (AIKEEQELMEEINEDEPVKAKKRKRDDNKDIDSEKEAAMEAEIKAARERA) are a coiled coil. Residue Lys-608 forms a Glycyl lysine isopeptide (Lys-Gly) (interchain with G-Cter in SUMO2) linkage. A disordered region spans residues 615 to 640 (EEINEDEPVKAKKRKRDDNKDIDSEK). The Nuclear localization signal signature appears at 626 to 630 (KKRKR). Residues 630 to 640 (RDDNKDIDSEK) are compositionally biased toward basic and acidic residues. The residue at position 638 (Ser-638) is a Phosphoserine. FF domains are found at residues 659 to 712 (LEAR…YVKT), 725 to 779 (IMQA…FVAA), and 791 to 846 (RGEK…YIEK). A Phosphoserine modification is found at Ser-834. A coiled-coil region spans residues 844 to 906 (IEKIAKNLDS…EEAIQNFKAL (63 aa)). A disordered region spans residues 870–895 (REREREVQKARSEQTKEIDREREQHK). FF domains follow at residues 896–952 (REEA…HIEA), 954–1010 (TKKK…YIRD), and 1012–1077 (YITA…YVDD). A Phosphoserine modification is found at Ser-933. Residues 1076 to 1098 (DDLDRRGPPPPPTASEPTRRSTK) form a disordered region.

Binds formin. Interacts (via the second WW domain) with TREX1 (via proline-rich region). Binds RNA polymerase II, HD and SF1. In terms of tissue distribution, detected in brain neurons.

Its subcellular location is the nucleus. In terms of biological role, transcription factor that binds RNA polymerase II and inhibits the elongation of transcripts from target promoters. Regulates transcription elongation in a TATA box-dependent manner. Necessary for TAT-dependent activation of the human immunodeficiency virus type 1 (HIV-1) promoter. This is Transcription elongation regulator 1 (TCERG1) from Homo sapiens (Human).